Here is a 211-residue protein sequence, read N- to C-terminus: Thymidylate kinase (211 aa).

11-18 serves as a coordination point for ATP; that stretch reads GPDGAGKT.

It belongs to the thymidylate kinase family.

The catalysed reaction is dTMP + ATP = dTDP + ADP. Phosphorylation of dTMP to form dTDP in both de novo and salvage pathways of dTTP synthesis. This chain is Thymidylate kinase, found in Streptococcus agalactiae serotype Ia (strain ATCC 27591 / A909 / CDC SS700).